We begin with the raw amino-acid sequence, 174 residues long: Frataxin homolog, mitochondrial (174 aa).

The N-terminal 21 residues, 1–21 (MIKRSLASLVRVSSVMGRRYM), are a transit peptide targeting the mitochondrion.

Belongs to the frataxin family. As to quaternary structure, monomer. Forms a 24-mer complex made up of 8 copies of a trimeric subcomplex. Increments in mitochondrial iron uptake induce stepwise assembly of species ranging from trimers to 24-mers. Interacts with ISU1 with a 1 to 1 stoichiometry; the interaction is direct. Interacts with YHB1, SDH1, SDH2, AIM45 and CIR1. In terms of processing, processed in two steps by mitochondrial processing peptidase (MPP). MPP first cleaves the precursor to intermediate form and subsequently converts the intermediate to mature size protein.

The protein localises to the mitochondrion matrix. It carries out the reaction 4 Fe(2+) + O2 + 4 H(+) = 4 Fe(3+) + 2 H2O. Functionally, promotes the biosynthesis of heme as well as the assembly and repair of iron-sulfur clusters by delivering Fe(2+) to proteins involved in these pathways. Plays a role in the protection against iron-catalyzed oxidative stress through its ability to catalyze the oxidation of Fe(2+) to Fe(3+). Can store large amounts of the metal in the form of a ferrihydrite mineral by oligomerization. May be involved in regulation of the mitochondrial electron transport chain. This Saccharomyces cerevisiae (strain ATCC 204508 / S288c) (Baker's yeast) protein is Frataxin homolog, mitochondrial.